The primary structure comprises 742 residues: Dynein axonemal intermediate chain 4 (742 aa).

WD repeat units lie at residues 462 to 502 (HCEC…DFPV), 511 to 559 (KHTS…DCND), 631 to 671 (GHKG…PILT), and 674 to 713 (NTTNAVYDIMWSPSSALMFGAVSENRVEIWDLGVSIIDPV).

In terms of assembly, part of the multisubunit axonemal dynein complex formed at least of two heavy chains and a number of intermediate and light chains. Associated with axonemal dynein subunits such as, DNAH2, DNAI3, and DYNLT1.

It localises to the cytoplasm. The protein resides in the cytoskeleton. The protein localises to the flagellum axoneme. It is found in the cilium axoneme. Its subcellular location is the dynein axonemal particle. Plays a critical role in the assembly of axonemal dynein complex, thereby playing a role in ciliary motility. The sequence is that of Dynein axonemal intermediate chain 4 from Xenopus laevis (African clawed frog).